Here is a 146-residue protein sequence, read N- to C-terminus: MFVGEYYHSLDEKGRLIVPNNFRQLLGETFYLTRGFERCLNIYTITDWNNFSEIISSFSPTDDLMRRLCRFWFSGSVQVTTDKLGRILIPSFLIDYAELYKDVVIIGAGRHIEIWAKERWEEFNKEENILESMKEINEKVSELWKR.

2 SpoVT-AbrB domains span residues Glu5–Asp47 and Ser76–Arg119.

This sequence belongs to the MraZ family. Forms oligomers.

The protein resides in the cytoplasm. It localises to the nucleoid. The protein is Transcriptional regulator MraZ of Dictyoglomus turgidum (strain DSM 6724 / Z-1310).